Reading from the N-terminus, the 115-residue chain is UPF0235 protein CTA_0423 (115 aa).

Belongs to the UPF0235 family.

This Chlamydia trachomatis serovar A (strain ATCC VR-571B / DSM 19440 / HAR-13) protein is UPF0235 protein CTA_0423.